A 248-amino-acid chain; its full sequence is Meiotically up-regulated gene 65 protein (248 aa).

Has a role in meiosis. The chain is Meiotically up-regulated gene 65 protein (mug65) from Schizosaccharomyces pombe (strain 972 / ATCC 24843) (Fission yeast).